Here is a 510-residue protein sequence, read N- to C-terminus: MNKELVLVVDFGGQYNQLIARRVRENRVYCEIVPYTTSIEDIKEKAPKGIIFTGGPNSVYGENAPRVQKELFDLGIPVLGICYGDQLMAHSLEGEVTSPEKREYGKTDVNLDNSSLLFKDMKEKDQCWMSHTDYISKVPKGFKIIATTDECPCAAMENVEKKLYGVQFHPEVEHTLFGKKMLKNFLFNVCNLKGDWSMSSFAEQQIKAIKEKVGDKKVICALSGGVDSSVAAVIVHKAIGKQLTCIFVDHGLLRKDEGDQVEKIFKDQFDMNLIRVNAQDRFLGKLKGVSDPERKRKIIGEEFIRVFEEEAKKLGNISFLVQGTIYPDIVESGTNTSATIKSHHNVGGLPEDMEFKLIEPLRELFKDEVRAVGEELGIPHKLVWRQPFPGPGLAIRVLGEVTEEKLAITREADAIFREEIAKAGLEEKIWQYFACLPNIQSVGVMGDERTYCHTIALRAVTSSDAMTSDWARIPYEVLDKVSRRIVNEVKEVNRIVYDVTSKPPATIEWE.

The Glutamine amidotransferase type-1 domain occupies 5–195 (LVLVVDFGGQ…LFNVCNLKGD (191 aa)). Cys82 functions as the Nucleophile in the catalytic mechanism. Catalysis depends on residues His169 and Glu171. A GMPS ATP-PPase domain is found at 196 to 385 (WSMSSFAEQQ…LGIPHKLVWR (190 aa)). Position 223–229 (223–229 (SGGVDSS)) interacts with ATP.

In terms of assembly, homodimer.

It catalyses the reaction XMP + L-glutamine + ATP + H2O = GMP + L-glutamate + AMP + diphosphate + 2 H(+). It functions in the pathway purine metabolism; GMP biosynthesis; GMP from XMP (L-Gln route): step 1/1. Functionally, catalyzes the synthesis of GMP from XMP. The polypeptide is GMP synthase [glutamine-hydrolyzing] (Clostridium botulinum (strain Kyoto / Type A2)).